The primary structure comprises 223 residues: Sigma non-opioid intracellular receptor 1 (223 aa).

Over 1–9 (MPWAVGRRW) the chain is Lumenal. Residues 2–8 (PWAVGRR) are targeting to endoplasmic reticulum-associated lipid droplets. Residues 10 to 30 (AWITLFLTIVAVLIQAVWLWL) form a helical membrane-spanning segment. Over 31-223 (GTQSFVFQRE…LTTYLFGQDP (193 aa)) the chain is Cytoplasmic. Residues 99–106 (SLSEYVLL) are important for ligand-binding. Residues 177 to 223 (VIPSTLAFALSDTIFSTQDFLTLFYTLRAYARGLRLELTTYLFGQDP) are C-terminal hydrophobic region.

It belongs to the ERG2 family. Homotrimer. Interacts with KCNA2; cocaine consumption leads to increased interaction. Forms a ternary complex with ANK2 and ITPR3. The complex is disrupted by agonists. Interacts with KCNA4. Interacts with RNF112 in an oxidative stress-regulated manner. As to expression, expressed in ependymocytes and neurons throughout the CNS from the olfactory bulb to the spinal cord. Expressed by progenitor, mature and satellite oligodendrocytes and by Schwann cells (at protein level). Expressed in liver, intestine, kidney, brain, lung and heart. Expressed by retinal cells.

The protein resides in the nucleus inner membrane. Its subcellular location is the nucleus outer membrane. The protein localises to the nucleus envelope. It is found in the cytoplasmic vesicle. It localises to the endoplasmic reticulum membrane. The protein resides in the membrane. Its subcellular location is the lipid droplet. The protein localises to the cell junction. It is found in the cell membrane. It localises to the cell projection. The protein resides in the growth cone. Its subcellular location is the postsynaptic density membrane. Functionally, functions in lipid transport from the endoplasmic reticulum and is involved in a wide array of cellular functions probably through regulation of the biogenesis of lipid microdomains at the plasma membrane. Involved in the regulation of different receptors it plays a role in BDNF signaling and EGF signaling. Also regulates ion channels like the potassium channel and could modulate neurotransmitter release. Plays a role in calcium signaling through modulation together with ANK2 of the ITP3R-dependent calcium efflux at the endoplasmic reticulum. Plays a role in several other cell functions including proliferation, survival and death. Originally identified for its ability to bind various psychoactive drugs it is involved in learning processes, memory and mood alteration. Necessary for proper mitochondrial axonal transport in motor neurons, in particular the retrograde movement of mitochondria. Plays a role in protecting cells against oxidative stress-induced cell death via its interaction with RNF112. The chain is Sigma non-opioid intracellular receptor 1 (Sigmar1) from Rattus norvegicus (Rat).